Here is a 165-residue protein sequence, read N- to C-terminus: Adenosine 5'-monophosphoramidase HINT3 (165 aa).

The segment at 1–23 (MAEKQAGLVGEPDPEGSSPGTSE) is disordered. Ala2 carries the N-acetylalanine modification. Residues 32–143 (VFCRVAAGQE…PVKEFGFLSK (112 aa)) enclose the HIT domain. AMP contacts are provided by residues 59-60 (DI) and 128-130 (HLH). The Histidine triad motif signature appears at 126–130 (HLHLH). His128 (tele-AMP-histidine intermediate) is an active-site residue.

Belongs to the HINT family. Forms dimers to octamers and even larger oligomer. Interacts with CALM1.

Its subcellular location is the cytoplasm. The protein resides in the nucleus. The enzyme catalyses adenosine 5'-phosphoramidate + H2O = AMP + NH4(+). In terms of biological role, exhibits adenosine 5'-monophosphoramidase activity, hydrolyzing purine nucleotide phosphoramidates with a single phosphate group such as adenosine 5'monophosphoramidate (AMP-NH2) to yield AMP and NH2. Hydrolyzes lysyl-AMP (AMP-N-epsilon-(N-alpha-acetyl lysine methyl ester)) generated by lysine tRNA ligase. This chain is Adenosine 5'-monophosphoramidase HINT3 (Hint3), found in Mus musculus (Mouse).